The chain runs to 349 residues: Ribosomal RNA small subunit methyltransferase C (349 aa).

The protein belongs to the methyltransferase superfamily. RsmC family. As to quaternary structure, monomer.

It localises to the cytoplasm. The catalysed reaction is guanosine(1207) in 16S rRNA + S-adenosyl-L-methionine = N(2)-methylguanosine(1207) in 16S rRNA + S-adenosyl-L-homocysteine + H(+). Specifically methylates the guanine in position 1207 of 16S rRNA in the 30S particle. The chain is Ribosomal RNA small subunit methyltransferase C from Psychromonas ingrahamii (strain DSM 17664 / CCUG 51855 / 37).